We begin with the raw amino-acid sequence, 276 residues long: Putative pyruvate, phosphate dikinase regulatory protein 1 (276 aa).

An ADP-binding site is contributed by G157–T164.

It belongs to the pyruvate, phosphate/water dikinase regulatory protein family. PDRP subfamily.

It catalyses the reaction N(tele)-phospho-L-histidyl/L-threonyl-[pyruvate, phosphate dikinase] + ADP = N(tele)-phospho-L-histidyl/O-phospho-L-threonyl-[pyruvate, phosphate dikinase] + AMP + H(+). The enzyme catalyses N(tele)-phospho-L-histidyl/O-phospho-L-threonyl-[pyruvate, phosphate dikinase] + phosphate + H(+) = N(tele)-phospho-L-histidyl/L-threonyl-[pyruvate, phosphate dikinase] + diphosphate. In terms of biological role, bifunctional serine/threonine kinase and phosphorylase involved in the regulation of the pyruvate, phosphate dikinase (PPDK) by catalyzing its phosphorylation/dephosphorylation. The protein is Putative pyruvate, phosphate dikinase regulatory protein 1 of Staphylococcus haemolyticus (strain JCSC1435).